We begin with the raw amino-acid sequence, 492 residues long: Bifunctional protein GlmU (492 aa).

Residues 1-241 (MIPENTGPAA…RWQVEGANDR (241 aa)) form a pyrophosphorylase region. UDP-N-acetyl-alpha-D-glucosamine is bound by residues 14–17 (LAAG), Lys28, Gln81, 86–87 (GT), 112–114 (YGD), Gly151, Glu166, Asn181, and Asn239. Residue Asp114 coordinates Mg(2+). Asn239 is a Mg(2+) binding site. Residues 242-262 (VQLAALGAELNRRTVEAWMRA) are linker. Residues 263–492 (GVTVVDPSTT…STPASTEEGK (230 aa)) form an N-acetyltransferase region. UDP-N-acetyl-alpha-D-glucosamine-binding residues include Arg344 and Lys362. His374 serves as the catalytic Proton acceptor. UDP-N-acetyl-alpha-D-glucosamine contacts are provided by Tyr377 and Asn388. Residues 397 to 398 (NY), Ser416, and Ala434 each bind acetyl-CoA. Positions 460–492 (WVPANRPGSRSAELAQAAINNSSSTPASTEEGK) are disordered. Residues 477-492 (AINNSSSTPASTEEGK) are compositionally biased toward polar residues.

In the N-terminal section; belongs to the N-acetylglucosamine-1-phosphate uridyltransferase family. This sequence in the C-terminal section; belongs to the transferase hexapeptide repeat family. In terms of assembly, homotrimer. Requires Mg(2+) as cofactor.

It localises to the cytoplasm. It carries out the reaction alpha-D-glucosamine 1-phosphate + acetyl-CoA = N-acetyl-alpha-D-glucosamine 1-phosphate + CoA + H(+). The catalysed reaction is N-acetyl-alpha-D-glucosamine 1-phosphate + UTP + H(+) = UDP-N-acetyl-alpha-D-glucosamine + diphosphate. It participates in nucleotide-sugar biosynthesis; UDP-N-acetyl-alpha-D-glucosamine biosynthesis; N-acetyl-alpha-D-glucosamine 1-phosphate from alpha-D-glucosamine 6-phosphate (route II): step 2/2. The protein operates within nucleotide-sugar biosynthesis; UDP-N-acetyl-alpha-D-glucosamine biosynthesis; UDP-N-acetyl-alpha-D-glucosamine from N-acetyl-alpha-D-glucosamine 1-phosphate: step 1/1. Its pathway is bacterial outer membrane biogenesis; LPS lipid A biosynthesis. Catalyzes the last two sequential reactions in the de novo biosynthetic pathway for UDP-N-acetylglucosamine (UDP-GlcNAc). The C-terminal domain catalyzes the transfer of acetyl group from acetyl coenzyme A to glucosamine-1-phosphate (GlcN-1-P) to produce N-acetylglucosamine-1-phosphate (GlcNAc-1-P), which is converted into UDP-GlcNAc by the transfer of uridine 5-monophosphate (from uridine 5-triphosphate), a reaction catalyzed by the N-terminal domain. This Pseudarthrobacter chlorophenolicus (strain ATCC 700700 / DSM 12829 / CIP 107037 / JCM 12360 / KCTC 9906 / NCIMB 13794 / A6) (Arthrobacter chlorophenolicus) protein is Bifunctional protein GlmU.